The chain runs to 227 residues: Arginine ABC transporter permease protein ArtM (227 aa).

The 197-residue stretch at 13–209 folds into the ABC transmembrane type-1 domain; the sequence is IPTSLLLTVV…IITGIATLLL (197 aa). 5 consecutive transmembrane segments (helical) span residues 17–37, 51–71, 78–98, 155–175, and 188–208; these read LLLT…LTFL, LYLT…IYAG, IIDS…ALAL, IILV…DIMG, and LTIY…ATLL.

It belongs to the binding-protein-dependent transport system permease family. HisMQ subfamily. As to quaternary structure, the complex is composed of two ATP-binding proteins (ArtP), two transmembrane proteins (ArtM and ArtQ) and a solute-binding protein (ArtI).

The protein localises to the cell inner membrane. Part of the ABC transporter complex ArtPIQM involved in arginine transport. Probably responsible for the translocation of the substrate across the membrane. The protein is Arginine ABC transporter permease protein ArtM (artM) of Haemophilus influenzae (strain ATCC 51907 / DSM 11121 / KW20 / Rd).